The primary structure comprises 503 residues: ATP synthase subunit alpha (503 aa).

Position 169–176 (169–176 (GDRGTGKT)) interacts with ATP.

It belongs to the ATPase alpha/beta chains family. F-type ATPases have 2 components, CF(1) - the catalytic core - and CF(0) - the membrane proton channel. CF(1) has five subunits: alpha(3), beta(3), gamma(1), delta(1), epsilon(1). CF(0) has three main subunits: a(1), b(2) and c(9-12). The alpha and beta chains form an alternating ring which encloses part of the gamma chain. CF(1) is attached to CF(0) by a central stalk formed by the gamma and epsilon chains, while a peripheral stalk is formed by the delta and b chains.

The protein resides in the cell inner membrane. It catalyses the reaction ATP + H2O + 4 H(+)(in) = ADP + phosphate + 5 H(+)(out). Produces ATP from ADP in the presence of a proton gradient across the membrane. The alpha chain is a regulatory subunit. The polypeptide is ATP synthase subunit alpha (Leptospira interrogans serogroup Icterohaemorrhagiae serovar copenhageni (strain Fiocruz L1-130)).